The chain runs to 187 residues: HTH-type transcriptional regulator NfxB (187 aa).

Positions 26–45 (LKELAEAAGVSKATLHRFCG) form a DNA-binding region, H-T-H motif.

Functionally, confers resistance to guinolones. May negatively regulate the expression of genes that are associated with cell permeability to drugs. In Pseudomonas aeruginosa (strain ATCC 15692 / DSM 22644 / CIP 104116 / JCM 14847 / LMG 12228 / 1C / PRS 101 / PAO1), this protein is HTH-type transcriptional regulator NfxB (nfxB).